Consider the following 204-residue polypeptide: Large ribosomal subunit protein uL4 (204 aa).

The tract at residues 56–79 (VSGTTAKPYGQKRTGRARQGSLRS) is disordered.

The protein belongs to the universal ribosomal protein uL4 family. In terms of assembly, part of the 50S ribosomal subunit.

Functionally, one of the primary rRNA binding proteins, this protein initially binds near the 5'-end of the 23S rRNA. It is important during the early stages of 50S assembly. It makes multiple contacts with different domains of the 23S rRNA in the assembled 50S subunit and ribosome. Forms part of the polypeptide exit tunnel. This is Large ribosomal subunit protein uL4 from Wolbachia pipientis subsp. Culex pipiens (strain wPip).